Consider the following 392-residue polypeptide: MFQIGEALMGQGSELAHVDLMIGDKGGPVGQAFANGLTQLSAGHTPLLSVIRPNLPPKPSTLIIPKVTVKNMDQAARIFGPAQSAVAKAVADSVEEGVIPKDQVEDLVIVASVFIHPEAQDYNKIYRYNYGATKLAIKRALEGFPDIDTVLEESNKSTHAIMGFKVTRLWDPPYLQIAFDNPNLEFVLSAISEIPKSDHVIIEAGTPLIKRYGTDVISKIRQVRPDAFIVADLKTLDTGNLEARMVADAAGDAIVVSALAPISTIDKLIEEAHKTGIYAVMDTLNQQDPISVLKQLKVMPDVIELHRGIDIEGTEHAWGNIGEIKKIAPKALVAVAGGVRLDKVPVALSQGADILVVGRAITNAKDVREMAEQFINSLNKPEIDQFRVMTDF.

Positions methionine 1–isoleucine 161 are formaldehyde-activating enzyme. Histidine 17 functions as the Proton donor in the catalytic mechanism. Residues aspartate 19, leucine 48, lysine 66, threonine 68, and glutamine 83 each contribute to the substrate site. Residues methionine 162–phenylalanine 392 form a 3-hexulose-6-phosphate synthase region.

The protein in the N-terminal section; belongs to the formaldehyde-activating enzyme family. This sequence in the C-terminal section; belongs to the HPS/KGPDC family. HPS subfamily.

The enzyme catalyses 5,6,7,8-tetrahydromethanopterin + formaldehyde = 5,10-methylenetetrahydromethanopterin + H2O. The catalysed reaction is D-ribulose 5-phosphate + formaldehyde = D-arabino-hex-3-ulose 6-phosphate. It functions in the pathway carbohydrate biosynthesis; D-ribose 5-phosphate biosynthesis. Its function is as follows. Catalyzes the condensation of formaldehyde with tetrahydromethanopterin (H(4)MPT) to 5,10-methylenetetrahydromethanopterin. In terms of biological role, catalyzes the reversible formation of ribulose-5-phosphate and formaldehyde from 3-hexulose-6-phosphate. This Methanosarcina mazei (strain ATCC BAA-159 / DSM 3647 / Goe1 / Go1 / JCM 11833 / OCM 88) (Methanosarcina frisia) protein is Bifunctional enzyme Fae/Hps.